A 559-amino-acid polypeptide reads, in one-letter code: Transcription activator of gluconeogenesis ERT1-2 (559 aa).

A DNA-binding region (zn(2)-C6 fungal-type) is located at residues 23 to 51; sequence CIHCQRTHLTCDNNRPCERCVARGFADTC. Disordered stretches follow at residues 63 to 159, 231 to 263, and 329 to 349; these read DDKE…TPSQ, SNSL…TPSA, and AGQP…DSPS. 2 stretches are compositionally biased toward low complexity: residues 139 to 159 and 231 to 244; these read QGPQ…TPSQ and SNSL…QSPN. Residues 245–260 are compositionally biased toward polar residues; it reads THSPHNQDQPTPQAAT. The PAS domain occupies 440–512; the sequence is ALLEYQKFIS…ELFSRIAFGD (73 aa).

It belongs to the ERT1/acuK family.

It localises to the nucleus. Functionally, transcription factor which regulates nonfermentable carbon utilization. Activator of gluconeogenetic genes. In Yarrowia lipolytica (strain CLIB 122 / E 150) (Yeast), this protein is Transcription activator of gluconeogenesis ERT1-2 (ERT1-2).